The following is a 111-amino-acid chain: Cytochrome c 2.1 (111 aa).

At S2 the chain carries N-acetylserine. The heme c site is built by C20, C23, H24, and M85.

It belongs to the cytochrome c family. In terms of processing, binds 1 heme c group covalently per subunit.

The protein resides in the mitochondrion intermembrane space. Its function is as follows. Electron carrier protein. The oxidized form of the cytochrome c heme group can accept an electron from the heme group of the cytochrome c1 subunit of cytochrome reductase. Cytochrome c then transfers this electron to the cytochrome oxidase complex, the final protein carrier in the mitochondrial electron-transport chain. The chain is Cytochrome c 2.1 (cyc-2.1) from Caenorhabditis elegans.